The following is a 142-amino-acid chain: uncharacterized protein (142 aa).

A disordered region spans residues 19–54 (IHTTPHPHTPHHTHHTHTTPTPTPHPHTHTPTPERS). Residues 26 to 35 (HTPHHTHHTH) are compositionally biased toward basic residues.

This is an uncharacterized protein from Saccharomyces cerevisiae (strain ATCC 204508 / S288c) (Baker's yeast).